The following is a 372-amino-acid chain: Putative glutamate--cysteine ligase 2 (372 aa).

It belongs to the glutamate--cysteine ligase type 2 family. YbdK subfamily. Homodimer.

The catalysed reaction is L-cysteine + L-glutamate + ATP = gamma-L-glutamyl-L-cysteine + ADP + phosphate + H(+). Its function is as follows. ATP-dependent carboxylate-amine ligase which exhibits weak glutamate--cysteine ligase activity. The polypeptide is Putative glutamate--cysteine ligase 2 (ybdK) (Salmonella arizonae (strain ATCC BAA-731 / CDC346-86 / RSK2980)).